A 156-amino-acid chain; its full sequence is Small ribosomal subunit protein uS7 (156 aa).

It belongs to the universal ribosomal protein uS7 family. In terms of assembly, part of the 30S ribosomal subunit. Contacts proteins S9 and S11.

One of the primary rRNA binding proteins, it binds directly to 16S rRNA where it nucleates assembly of the head domain of the 30S subunit. Is located at the subunit interface close to the decoding center, probably blocks exit of the E-site tRNA. This chain is Small ribosomal subunit protein uS7, found in Bacillus cereus (strain B4264).